Consider the following 87-residue polypeptide: Large ribosomal subunit protein bL27 (87 aa).

A disordered region spans residues 1–21 (MAHKKAGGSSRNGRDSESKRL).

The protein belongs to the bacterial ribosomal protein bL27 family.

In Paraburkholderia xenovorans (strain LB400), this protein is Large ribosomal subunit protein bL27.